Consider the following 118-residue polypeptide: V-type proton ATPase subunit G 3 (118 aa).

Residues serine 3–aspartate 54 are a coiled coil. Residues lysine 19–glutamate 39 are disordered.

It belongs to the V-ATPase G subunit family. In terms of assembly, V-ATPase is a heteromultimeric enzyme made up of two complexes: the ATP-hydrolytic V1 complex and the proton translocation V0 complex. The V1 complex consists of three catalytic AB heterodimers that form a heterohexamer, three peripheral stalks each consisting of EG heterodimers, one central rotor including subunits D and F, and the regulatory subunits C and H. The proton translocation complex V0 consists of the proton transport subunit a, a ring of proteolipid subunits c9c'', rotary subunit d, subunits e and f, and two accessory subunits.

Subunit of the V1 complex of vacuolar(H+)-ATPase (V-ATPase), a multisubunit enzyme composed of a peripheral complex (V1) that hydrolyzes ATP and a membrane integral complex (V0) that translocates protons. V-ATPase is responsible for acidifying and maintaining the pH of intracellular compartments and in some cell types, is targeted to the plasma membrane, where it is responsible for acidifying the extracellular environment. The chain is V-type proton ATPase subunit G 3 (atp6v1g3) from Xenopus laevis (African clawed frog).